Consider the following 542-residue polypeptide: MNVERKLESLSLQQQQQEEQQDESEQPNQGVEDEEEEEYDEEEYEEEEEDINFSKETLEAAMATKVSIEQYYTSLFKSLKERDDRRCFLEKKMEELNLREEQKSVKRRELDKKETEYIKSRRIRLTGHSFESIRIIGRGAFGEVRLVKMKKNNKFFAMKKLDKSKMIEKHQTIHVRSERDILADSNNIHGSNPWIVSLYYSFQDANFLYLIMEYVPGGDMMTQLIKYDTFTEDATRFYIAETVLALHSIHKLSYIHRDIKPDNLLIDQKGHIKVSDFGLCTGLQTNRVPTLAEIYKKYEGDNNIREEDQTPQSRSARFDSWKRQRRVLAYSNVGTPDYTAPEVLMKDGYSAECDWWSVGVIMFEMLVGYPPFCSESIRETYHKIMNWKQTLPKIMEEAKAEVNLSPEAQDLIERFLTDPMTRIGFNGVEEIQSHPFFKGVDWRRLRETRPPIIPQLSSPTDTSNFDHYEEEQQPEPMQPVQSKSRRKITSFDIPFIGYTYRNFDAMRDAFGSVNSRDAFGSINSREAFGSINNRDSLQGANM.

The segment at 1–52 (MNVERKLESLSLQQQQQEEQQDESEQPNQGVEDEEEEEYDEEEYEEEEEDIN) is disordered. A compositionally biased stretch (low complexity) spans 9–18 (SLSLQQQQQE). Residues 19 to 51 (EQQDESEQPNQGVEDEEEEEYDEEEYEEEEEDI) show a composition bias toward acidic residues. Residues 130–437 (FESIRIIGRG…VEEIQSHPFF (308 aa)) form the Protein kinase domain. ATP-binding positions include 136–144 (IGRGAFGEV) and Lys-159. Asp-258 functions as the Proton acceptor in the catalytic mechanism. An AGC-kinase C-terminal domain is found at 438 to 510 (KGVDWRRLRE…RNFDAMRDAF (73 aa)). A disordered region spans residues 452–486 (IIPQLSSPTDTSNFDHYEEEQQPEPMQPVQSKSRR). The segment covering 455–465 (QLSSPTDTSNF) has biased composition (polar residues).

This sequence belongs to the protein kinase superfamily. AGC Ser/Thr protein kinase family.

The protein localises to the cytoplasm. It catalyses the reaction L-seryl-[protein] + ATP = O-phospho-L-seryl-[protein] + ADP + H(+). It carries out the reaction L-threonyl-[protein] + ATP = O-phospho-L-threonyl-[protein] + ADP + H(+). The chain is Probable serine/threonine-protein kinase ndrB (ndrB) from Dictyostelium discoideum (Social amoeba).